A 172-amino-acid chain; its full sequence is Co-chaperone protein HscB homolog (172 aa).

One can recognise a J domain in the interval 2–74 (NHFELFGLVE…LRRAEYLLSL (73 aa)).

This sequence belongs to the HscB family. As to quaternary structure, interacts with HscA and stimulates its ATPase activity.

In terms of biological role, co-chaperone involved in the maturation of iron-sulfur cluster-containing proteins. Seems to help targeting proteins to be folded toward HscA. The protein is Co-chaperone protein HscB homolog of Aeromonas salmonicida (strain A449).